A 317-amino-acid chain; its full sequence is Adenine deaminase (317 aa).

Zn(2+) contacts are provided by histidine 14, histidine 16, and histidine 194. The Proton donor role is filled by glutamate 197. Aspartate 275 is a Zn(2+) binding site. Residue aspartate 276 coordinates substrate.

It belongs to the metallo-dependent hydrolases superfamily. Adenosine and AMP deaminases family. Adenine deaminase type 2 subfamily. Requires Zn(2+) as cofactor.

The enzyme catalyses adenine + H2O + H(+) = hypoxanthine + NH4(+). Functionally, catalyzes the hydrolytic deamination of adenine to hypoxanthine. Plays an important role in the purine salvage pathway and in nitrogen catabolism. The protein is Adenine deaminase of Pseudomonas syringae pv. tomato (strain ATCC BAA-871 / DC3000).